Here is a 120-residue protein sequence, read N- to C-terminus: Aspartate 1-decarboxylase (120 aa).

The active-site Schiff-base intermediate with substrate; via pyruvic acid is Ser-25. Ser-25 is subject to Pyruvic acid (Ser). Substrate is bound at residue Thr-57. The Proton donor role is filled by Tyr-58. A substrate-binding site is contributed by 73–75 (GAA).

Belongs to the PanD family. As to quaternary structure, heterooctamer of four alpha and four beta subunits. Requires pyruvate as cofactor. In terms of processing, is synthesized initially as an inactive proenzyme, which is activated by self-cleavage at a specific serine bond to produce a beta-subunit with a hydroxyl group at its C-terminus and an alpha-subunit with a pyruvoyl group at its N-terminus.

It is found in the cytoplasm. The catalysed reaction is L-aspartate + H(+) = beta-alanine + CO2. The protein operates within cofactor biosynthesis; (R)-pantothenate biosynthesis; beta-alanine from L-aspartate: step 1/1. Its function is as follows. Catalyzes the pyruvoyl-dependent decarboxylation of aspartate to produce beta-alanine. The protein is Aspartate 1-decarboxylase of Thermosipho africanus (strain TCF52B).